The sequence spans 434 residues: Putative G3BP-like protein (434 aa).

One can recognise an NTF2 domain in the interval 18–134 (IGWMFVQEYY…YFVLNDIFRF (117 aa)). Disordered regions lie at residues 141–180 (EEEE…EGHY) and 274–308 (VKSQ…PYTQ). A Phosphoserine modification is found at serine 145. Residues 148-157 (AVEKEKKDVA) show a composition bias toward basic and acidic residues. Positions 276–291 (SQASVSSTASTTGQTV) are enriched in low complexity. The segment covering 296–308 (ADQTQQPTAPYTQ) has biased composition (polar residues). The RRM domain maps to 315–386 (TSVFVKNIPP…ATLNIEERRR (72 aa)). The disordered stretch occupies residues 390–434 (GKFNKSGDKKSNDNYNGMKRNFRKGNRGAFDGRSKEVTTSKKQNN). Over residues 419–428 (FDGRSKEVTT) the composition is skewed to basic and acidic residues.

In terms of biological role, probable scaffold protein that may be involved in mRNA transport. In Schizosaccharomyces pombe (strain 972 / ATCC 24843) (Fission yeast), this protein is Putative G3BP-like protein (nxt3).